Consider the following 808-residue polypeptide: N-terminal kinase-like protein (808 aa).

In terms of domain architecture, Protein kinase spans 14–314 (FELIPEPPEG…PEDFCRHKVL (301 aa)). HEAT repeat units lie at residues 350–388 (IIPV…VNTQ), 389–427 (IFPH…LNVE), and 507–545 (ILPV…EDPT). Disordered stretches follow at residues 540 to 566 (VSED…GGAA), 587 to 646 (SHPT…RWDD), and 658 to 808 (SVLA…RKLD). Residues 556-566 (AASSPGMGGAA) show a composition bias toward low complexity. Polar residues predominate over residues 587-600 (SHPTTAPTETNIPQ). The span at 601 to 617 (RPTPEGVPAPAPTPVPA) shows a compositional bias: pro residues. Positions 660–680 (LAQQDDWSTGGQVSRASQVSN) are enriched in polar residues. The segment covering 681–690 (SDHKSSKSPE) has biased composition (basic and acidic residues). Ser754 carries the phosphoserine modification. Positions 755–764 (WGEDNWEGLE) are enriched in acidic residues. The stretch at 761–797 (EGLETDSRQVKAELARKKREERRREMEAKRAERKVAK) forms a coiled coil. Composition is skewed to basic and acidic residues over residues 765 to 775 (TDSRQVKAELA) and 782 to 795 (RRRE…ERKV). Residues 793-808 (RKVAKGPMKLGARKLD) are interaction with COPB1.

This sequence belongs to the protein kinase superfamily. As to quaternary structure, interacts with GORAB. Interacts with COPA, COPB1 and COPB2. Homooligomer. Interacts with AP2B1. In terms of tissue distribution, ubiquitous.

It localises to the cytoplasm. The protein localises to the cytoskeleton. Its subcellular location is the microtubule organizing center. It is found in the centrosome. The protein resides in the endoplasmic reticulum-Golgi intermediate compartment. It localises to the golgi apparatus. The protein localises to the cis-Golgi network. Its subcellular location is the nucleus. In terms of biological role, regulates COPI-mediated retrograde protein traffic at the interface between the Golgi apparatus and the endoplasmic reticulum. Involved in the maintenance of the Golgi apparatus morphology. Functionally, acts as a transcriptional activator. It binds to three different types of GC-rich DNA binding sites (box-A, -B and -C) in the beta-polymerase promoter region. It also binds to the TERT promoter region. The chain is N-terminal kinase-like protein (SCYL1) from Homo sapiens (Human).